Consider the following 603-residue polypeptide: Phosphogluconate dehydratase (603 aa).

The [4Fe-4S] cluster site is built by C154 and C221.

The protein belongs to the IlvD/Edd family. It depends on [4Fe-4S] cluster as a cofactor.

It catalyses the reaction 6-phospho-D-gluconate = 2-dehydro-3-deoxy-6-phospho-D-gluconate + H2O. It participates in carbohydrate metabolism; Entner-Doudoroff pathway. Functionally, catalyzes the dehydration of 6-phospho-D-gluconate to 2-dehydro-3-deoxy-6-phospho-D-gluconate. The protein is Phosphogluconate dehydratase of Escherichia coli O157:H7.